Here is a 475-residue protein sequence, read N- to C-terminus: GlcNAc-binding protein A (475 aa).

The first 27 residues, Met-1 to Ala-27, serve as a signal peptide directing secretion. The 168-residue stretch at His-28–Phe-195 folds into the Chitin-binding type-4 domain. Residues Ala-426–Trp-468 form the Chitin-binding type-3 domain.

Belongs to the GbpA family.

It localises to the secreted. Probably interacts with GlcNAc residues. May promote attachment to both epithelial cell surfaces and chitin. In Shewanella oneidensis (strain ATCC 700550 / JCM 31522 / CIP 106686 / LMG 19005 / NCIMB 14063 / MR-1), this protein is GlcNAc-binding protein A.